A 224-amino-acid polypeptide reads, in one-letter code: Small ribosomal subunit protein uS5 (224 aa).

The segment at 1 to 40 is disordered; that stretch reads MAEQPAGGQGAGDSRDSRGDRDSRGRRGDGGRGGRDRDGD. The segment covering 13 to 40 has biased composition (basic and acidic residues); it reads DSRDSRGDRDSRGRRGDGGRGGRDRDGD. Positions 44–107 constitute an S5 DRBM domain; that stretch reads YLERVVAINR…EEARKGFFRV (64 aa).

This sequence belongs to the universal ribosomal protein uS5 family. As to quaternary structure, part of the 30S ribosomal subunit. Contacts proteins S4 and S8.

In terms of biological role, with S4 and S12 plays an important role in translational accuracy. Functionally, located at the back of the 30S subunit body where it stabilizes the conformation of the head with respect to the body. The sequence is that of Small ribosomal subunit protein uS5 from Mycolicibacterium paratuberculosis (strain ATCC BAA-968 / K-10) (Mycobacterium paratuberculosis).